We begin with the raw amino-acid sequence, 626 residues long: Phosphomethylpyrimidine synthase (626 aa).

Positions 1–22 (MTKQEKAINLSESAQVDQQSVQ) are disordered. A compositionally biased stretch (polar residues) spans 10 to 22 (LSESAQVDQQSVQ). Substrate contacts are provided by residues Asn-232, Met-261, Tyr-290, His-326, 346–348 (SRG), 387–390 (DGLR), and Glu-426. His-430 provides a ligand contact to Zn(2+). Residue Tyr-453 coordinates substrate. His-494 lines the Zn(2+) pocket. 3 residues coordinate [4Fe-4S] cluster: Cys-574, Cys-577, and Cys-582.

This sequence belongs to the ThiC family. In terms of assembly, homodimer. Requires [4Fe-4S] cluster as cofactor.

It catalyses the reaction 5-amino-1-(5-phospho-beta-D-ribosyl)imidazole + S-adenosyl-L-methionine = 4-amino-2-methyl-5-(phosphooxymethyl)pyrimidine + CO + 5'-deoxyadenosine + formate + L-methionine + 3 H(+). Its pathway is cofactor biosynthesis; thiamine diphosphate biosynthesis. In terms of biological role, catalyzes the synthesis of the hydroxymethylpyrimidine phosphate (HMP-P) moiety of thiamine from aminoimidazole ribotide (AIR) in a radical S-adenosyl-L-methionine (SAM)-dependent reaction. The polypeptide is Phosphomethylpyrimidine synthase (Pseudomonas putida (strain ATCC 700007 / DSM 6899 / JCM 31910 / BCRC 17059 / LMG 24140 / F1)).